We begin with the raw amino-acid sequence, 337 residues long: Heat-inducible transcription repressor HrcA (337 aa).

The protein belongs to the HrcA family.

Negative regulator of class I heat shock genes (grpE-dnaK-dnaJ and groELS operons). Prevents heat-shock induction of these operons. This is Heat-inducible transcription repressor HrcA from Nocardioides sp. (strain ATCC BAA-499 / JS614).